The following is a 148-amino-acid chain: UPF0178 protein Mlg_1612 (148 aa).

Belongs to the UPF0178 family.

The polypeptide is UPF0178 protein Mlg_1612 (Alkalilimnicola ehrlichii (strain ATCC BAA-1101 / DSM 17681 / MLHE-1)).